The sequence spans 262 residues: Nurim (262 aa).

The Nuclear portion of the chain corresponds to 1 to 4 (MAPA). A helical membrane pass occupies residues 5–28 (LLLIPAALASFILAFGTGVEFVRF). At 29 to 58 (TSLRPLLGGIPESGGPDARQGWLAALQDRS) the chain is on the perinuclear space side. The chain crosses the membrane as a helical span at residues 59–80 (ILAPLAWDLGLLLLFVGQHSLM). Over 81–97 (AAERVKAWTSRYFGVLQ) the chain is Nuclear. Residues 98–114 (RSLYVACTALALQLVMR) traverse the membrane as a helical segment. Over 115 to 133 (YWEPIPKGPVLWEARAEPW) the chain is Perinuclear space. The helical transmembrane segment at 134–164 (ATWVPLLCFVLHVISWLLIFSILLVFDYAEL) threads the bilayer. Residues 165-191 (MGLKQVYYHVLGLGEPLALKSPRALRL) are Nuclear-facing. Residues 192–210 (FSHLRHPVCVELLTVLWVV) form a helical membrane-spanning segment. Over 211–216 (PTLGTD) the chain is Perinuclear space. Residues 217-234 (RLLLAFLLTLYLGLAHGL) form a helical membrane-spanning segment. Residues 235–262 (DQQDLRYLRAQLQRKLHLLSRPQDGEAE) lie on the Nuclear side of the membrane.

The protein belongs to the nurim family.

Its subcellular location is the nucleus inner membrane. The polypeptide is Nurim (NRM) (Homo sapiens (Human)).